The following is a 285-amino-acid chain: Probable endonuclease 4 (285 aa).

Residues His69, His109, Glu145, Asp179, His182, His216, Asp229, His231, and Glu261 each contribute to the Zn(2+) site.

This sequence belongs to the AP endonuclease 2 family. Zn(2+) serves as cofactor.

It carries out the reaction Endonucleolytic cleavage to 5'-phosphooligonucleotide end-products.. Endonuclease IV plays a role in DNA repair. It cleaves phosphodiester bonds at apurinic or apyrimidinic (AP) sites, generating a 3'-hydroxyl group and a 5'-terminal sugar phosphate. In Cronobacter sakazakii (strain ATCC BAA-894) (Enterobacter sakazakii), this protein is Probable endonuclease 4.